Reading from the N-terminus, the 151-residue chain is Natriuretic peptides A (151 aa).

The N-terminal stretch at 1 to 25 is a signal peptide; that stretch reads MSSFSTTTVSFLLLLAFQLLGQTRA. The disordered stretch occupies residues 62 to 105; that stretch reads VLSEPNEEAGAALSPLPEVPPWTGEVSPAQRDGGALGRGPWDSS. Positions 93–103 are excised as a propeptide; sequence DGGALGRGPWD. Position 129 is a phosphoserine (S129). C130 and C146 are joined by a disulfide. The interval 147–151 is important for degradation of atrial natriuretic peptide by IDE; sequence NSFRY.

Belongs to the natriuretic peptide family. In terms of assembly, homodimer; disulfide-linked antiparallel dimer. The precursor molecule is proteolytically cleaved by CORIN at Arg-123 to produce atrial natriuretic peptide. Undergoes further proteolytic cleavage by unknown proteases to give rise to long-acting natriuretic peptide, vessel dilator and kaliuretic peptide. Additional processing gives rise to the auriculin and atriopeptin peptides. In the kidneys, alternative processing by an unknown protease results in the peptide urodilatin. Post-translationally, cleavage by MME initiates degradation of the factor and thereby regulates its activity. Degraded by IDE (in vitro). During IDE degradation, the resulting products can temporarily stimulate NPR2 to produce cGMP, before the fragments are completely degraded and inactivated by IDE (in vitro). In terms of processing, degraded by IDE. Phosphorylation on Ser-129 decreases vasorelaxant activity. In terms of tissue distribution, detected in the kidney distal tubular cells (at protein level). Present in urine (at protein level). As to expression, detected in atrial and ventricular plasma samples, and in adipocytes (at protein level). Detected in urine in one study. However, was not detected in urine in another study. In the brain, predominantly expressed in the gray matter with very weak expression in the white matter (at protein level). Localizes to astrocyte-like structures throughout the white matter, and in the cerebral vessels detected in the leptomeningeal and parenchymal vessels, and endothelium and smooth muscle layers (at protein level). Relatively low levels of expression in the kidneys compared to urodilatin (at protein level).

The protein localises to the secreted. It is found in the perikaryon. The protein resides in the cell projection. Functionally, hormone that plays a key role in mediating cardio-renal homeostasis, and is involved in vascular remodeling and regulating energy metabolism. Acts by specifically binding and stimulating NPR1 to produce cGMP, which in turn activates effector proteins, such as PRKG1, that drive various biological responses. Regulates vasodilation, natriuresis, diuresis and aldosterone synthesis and is therefore essential for regulating blood pressure, controlling the extracellular fluid volume and maintaining the fluid-electrolyte balance. Also involved in inhibiting cardiac remodeling and cardiac hypertrophy by inducing cardiomyocyte apoptosis and attenuating the growth of cardiomyocytes and fibroblasts. Plays a role in female pregnancy by promoting trophoblast invasion and spiral artery remodeling in uterus, and thus prevents pregnancy-induced hypertension. In adipose tissue, acts in various cGMP- and PKG-dependent pathways to regulate lipid metabolism and energy homeostasis. This includes up-regulating lipid metabolism and mitochondrial oxygen utilization by activating the AMP-activated protein kinase (AMPK), and increasing energy expenditure by acting via MAPK11 to promote the UCP1-dependent thermogenesis of brown adipose tissue. Binds the clearance receptor NPR3 which removes the hormone from circulation. In terms of biological role, may have a role in cardio-renal homeostasis through regulation of natriuresis, diuresis, vasodilation, and inhibiting aldosterone synthesis. In vitro, promotes the production of cGMP and induces vasodilation. May promote natriuresis, at least in part, by enhancing prostaglandin E2 synthesis resulting in the inhibition of renal Na+-K+-ATPase. However reports on the involvement of this peptide in mammal blood volume and blood pressure homeostasis are conflicting; according to a report, in vivo it is not sufficient to activate cGMP and does not inhibit collecting duct transport nor effect diuresis and natriuresis. Appears to bind to specific receptors that are distinct from the receptors bound by atrial natriuretic peptide and vessel dilator. Possibly enhances protein excretion in urine by decreasing proximal tubular protein reabsorption. May have a role in cardio-renal homeostasis through regulation of natriuresis, diuresis, and vasodilation. In vitro, promotes the production of cGMP and induces vasodilation. May promote natriuresis, at least in part, by enhancing prostaglandin E2 synthesis resulting in the inhibition of renal Na+-K+-ATPase. However reports on the involvement of this peptide in mammal blood volume and blood pressure homeostasis are conflicting; according to a report it is not sufficient to activate cGMP and does not inhibit collecting duct transport nor effect diuresis and natriuresis. Appears to bind to specific receptors that are distinct from the receptors bound by the atrial natriuretic and long-acting natriuretic peptides. Possibly functions in protein excretion in urine by maintaining the integrity of the proximal tubules and enhancing protein excretion by decreasing proximal tubular protein reabsorption. Its function is as follows. May have a role in cardio-renal homeostasis through regulation of diuresis and inhibiting aldosterone synthesis. In vitro, promotes the production of cGMP and induces vasodilation. May promote natriuresis, at least in part, by enhancing prostaglandin E2 synthesis resulting in the inhibition of renal Na+-K+-ATPase. May have a role in potassium excretion but not sodium excretion (natriuresis). Possibly enhances protein excretion in urine by decreasing proximal tubular protein reabsorption. Functionally, hormone produced in the kidneys that appears to be important for maintaining cardio-renal homeostasis. Mediates vasodilation, natriuresis and diuresis primarily in the renal system, in order to maintain the extracellular fluid volume and control the fluid-electrolyte balance. Specifically binds and stimulates cGMP production by renal transmembrane receptors, likely NPR1. Urodilatin not ANP, may be the natriuretic peptide responsible for the regulation of sodium and water homeostasis in the kidney. In terms of biological role, may have a role in cardio-renal homeostasis through regulation of natriuresis and vasodilation. In vivo promotes natriuresis and in vitro, vasodilates renal artery strips. May have a role in cardio-renal homeostasis through regulation of regulation of natriuresis and vasodilation. In vivo promotes natriuresis. In vitro, vasodilates intestinal smooth muscle but not smooth muscle strips. Its function is as follows. May have a role in cardio-renal homeostasis through regulation of natriuresis and vasodilation. In vivo promotes natriuresis. In vitro, selectively vasodilates intestinal and vascular smooth muscle strips. Functionally, may have a role in cardio-renal homeostasis through regulation of natriuresis and vasodilation. In vivo promotes natriuresis. In vitro, selectively vasodilates intestinal smooth muscle but not vascular smooth muscle strips. The polypeptide is Natriuretic peptides A (NPPA) (Homo sapiens (Human)).